We begin with the raw amino-acid sequence, 290 residues long: MPFDFRRFDIYRKVPKDLTQPTYTGAIISICCCLFILFLFLSELTGFITTEVVNELYVDDPDKDSGGKIDVSLNISLPNLHCELVGLDIQDEMGRHEVGHIDNSMKIPLNNGAGCRFEGQFSINKVPGNFHVSTHSATAQPQNPDMTHVIHKLSFGDTLQVQNIHGAFNALGGADRLTSNPLASHDYILKIVPTVYEDKSGKQRYSYQYTVANKEYVAYSHTGRIIPAIWFRYDLSPITVKYTERRQPLYRFITTICAIIGGTFTVAGILDSCIFTASEAWKKIQLGKMH.

The Cytoplasmic segment spans residues 1-26 (MPFDFRRFDIYRKVPKDLTQPTYTGA). A helical membrane pass occupies residues 27–47 (IISICCCLFILFLFLSELTGF). Over 48-254 (ITTEVVNELY…RRQPLYRFIT (207 aa)) the chain is Lumenal. A glycan (N-linked (GlcNAc...) asparagine) is linked at Asn-74. A helical membrane pass occupies residues 255–275 (TICAIIGGTFTVAGILDSCIF). Residues 276–290 (TASEAWKKIQLGKMH) lie on the Cytoplasmic side of the membrane.

The protein belongs to the ERGIC family. As to quaternary structure, may form a heteromeric complex composed of ERGIC1, ERGIC2 and ERGIC3. Within the complex, the interaction with ERGIC3 is direct. Interacts with ERGIC3/ERV46. Post-translationally, N-glycosylated.

Its subcellular location is the endoplasmic reticulum membrane. It is found in the endoplasmic reticulum-Golgi intermediate compartment membrane. It localises to the golgi apparatus membrane. Possible role in transport between endoplasmic reticulum and Golgi. This is Endoplasmic reticulum-Golgi intermediate compartment protein 1 (ERGIC1) from Homo sapiens (Human).